The primary structure comprises 63 residues: Large ribosomal subunit protein bL28 (63 aa).

The protein belongs to the bacterial ribosomal protein bL28 family.

In Geotalea uraniireducens (strain Rf4) (Geobacter uraniireducens), this protein is Large ribosomal subunit protein bL28.